Here is a 943-residue protein sequence, read N- to C-terminus: MEYNFREIEKKWQKIWVDNHTYQVNEDASKQKFYVLNMFPYPSGAGLHVGHPLGYIASDIYARYKRLQGFNVLNPMGYDAYGLPAEQYAIQTGQHPAITTVNNINRYREQLDKIGFSFDWNREIRTCDPEYYHWTQWAFIKMFNSYYCNDEKQARPIEELIEAFSTNGTQGMNVACGEEMDFTADEWNAKSEKEQQEILMNYRIAYLGNTMVNWCPALGTVLANDEVVDGVSERGGYPVIQKVMRQWCLRVSAYAQRLLDGLETVEWTDSLKETQRNWIGRSEGAEMNFKVKDSDIEFTIFTTRADTVFGVTFMVLAPESELVAKLTTPEQKAEVDAYLDRTKKRTERERIADRSVSGVFSGSYAINPLTNEPIPVWISDYVLAGYGTGAIMAVPAHDSRDYAFAKHFNLEIRPLIEGCDVSEESFDAKEGIMMNSPRPGAPEGGLVLNGLTVKEAIAKTKEYIKATGLGRVKVNFRLRDAIFSRQRYWGEPFPVYYKDGMPYMIDESCLPLELPEVAKFLPTETGEPPLGHATKWAWDTVNKCVTDNENIDNRTIFPLELNTMPGFAGSSAYYLRYMDPRNHEALVSPAVDQYWKNVDLYVGGTEHATGHLIYSRFWNKFLHDWGISVAEEPFQKLVNQGMIQGRSNFVYRIKDTNTFVSLNLKDQYEVTPIHVDVNIVSNDILDLEAFKAWRPEYETAEFILEDGKYICGWAVEKMSKSMFNVVNPDMIVEKYGADTLRMYEMFLGPVEQSKPWDTNGIDGVHRFIKKFWSLFYDRNGEYLVKDEPATKEELKALHKLIKKVTGDIEQFSYNTSVSAFMICVNELSSLKCNKKEVLEQLIVVLAPFAPHVCEELWDTLGNTTSVCDAQWPTFNEQYLVEDTVNYTISFNGKARFNMEFPADAASDAIQATVLADERSLKWTEGKTPKKVIVVPKKIVNIVI.

The short motif at 40 to 51 (PYPSGAGLHVGH) is the 'HIGH' region element. Positions 717-721 (KMSKS) match the 'KMSKS' region motif. Position 720 (lysine 720) interacts with ATP.

Belongs to the class-I aminoacyl-tRNA synthetase family.

The protein localises to the cytoplasm. The catalysed reaction is tRNA(Leu) + L-leucine + ATP = L-leucyl-tRNA(Leu) + AMP + diphosphate. This Bacteroides fragilis (strain YCH46) protein is Leucine--tRNA ligase.